A 282-amino-acid chain; its full sequence is UDP-3-O-acyl-N-acetylglucosamine deacetylase (282 aa).

Zn(2+)-binding residues include histidine 80, histidine 240, and aspartate 244. The active-site Proton donor is the histidine 267.

This sequence belongs to the LpxC family. It depends on Zn(2+) as a cofactor.

It localises to the plastid. The protein localises to the chloroplast. The catalysed reaction is a UDP-3-O-[(3R)-3-hydroxyacyl]-N-acetyl-alpha-D-glucosamine + H2O = a UDP-3-O-[(3R)-3-hydroxyacyl]-alpha-D-glucosamine + acetate. It functions in the pathway glycolipid biosynthesis; lipid IV(A) biosynthesis; lipid IV(A) from (3R)-3-hydroxytetradecanoyl-[acyl-carrier-protein] and UDP-N-acetyl-alpha-D-glucosamine: step 2/6. In terms of biological role, catalyzes the hydrolysis of UDP-3-O-myristoyl-N-acetylglucosamine to form UDP-3-O-myristoylglucosamine and acetate. Involved in the biosynthesis of lipid A, a phosphorylated glycolipid that in bacteria anchors the lipopolysaccharide to the outer membrane of the cell. The target for the lipopolysaccharides produced in the chloroplast could either be the cell envelope of the eukaryote or the plastid membrane. The chain is UDP-3-O-acyl-N-acetylglucosamine deacetylase from Cyanidium caldarium (Red alga).